The sequence spans 901 residues: MLIKLLTKVFGSRNDRTLRRMRKVVNIINAMEPEIEKLSDEELKGKTAEFRARLEKGEVLENLIPEAFAVVREASKRVFGMRHFDVQLLGGMVLNERCIAEMRTGEGKTLTATLPAYLNALTGKGVHVVTVNDYLAQRDAENNRPLFEFLGLTVGINLPGMPAPAKREAYAADITYGTNNEYGFDYLRDNMAFSPEERVQRKLHYALVDEVDSILIDEARTPLIISGPAEDSSEMYKRVNKIIPHLIRQEKEDSETFQGEGHFSVDEKSRQVNLTERGLVLIEELLVKEGIMDEGESLYSPANIMLMHHVTAALRAHALFTRDVDYIVKDGEVIIVDEHTGRTMQGRRWSDGLHQAVEAKEGVQIQNENQTLASITFQNYFRLYEKLAGMTGTADTEAFEFSSIYKLDTVVVPTNRPMIRKDLPDLVYMTEAEKIQAIIEDIKERTAKGQPVLVGTISIEKSELVSNELTKAGIKHNVLNAKFHANEAAIVAQAGYPAAVTIATNMAGRGTDIVLGGSWQAEVAALENPTAEQIEKIKADWQVRHDAVLAAGGLHIIGTERHESRRIDNQLRGRSGRQGDAGSSRFYLSMEDALMRIFASDRVSGMMRKLGMKPGEAIEHPWVTKAIANAQRKVESRNFDIRKQLLEYDDVANDQRRAIYSQRNELLDVSDVSETINSIREDVFKATIDAYIPPQSLEEMWDIPGLQERLKNDFDLDLPIAEWLDKEPELHEETLRERILAQSIEVYQRKEEVVGAEMMRHFEKGVMLQTLDSLWKEHLAAMDYLRQGIHLRGYAQKDPKQEYKRESFSMFAAMLESLKYEVISTLSKVQVRMPEEVEELEQQRRMEAERLAQMQQLSHQDDDSAAAAALAAQTGERKVGRNDPCPCGSGKKYKQCHGRLQ.

Residues Gln87, 105–109 (GEGKT), and Asp512 contribute to the ATP site. Residues 859–901 (HQDDDSAAAAALAAQTGERKVGRNDPCPCGSGKKYKQCHGRLQ) form a disordered region. Residues Cys885, Cys887, Cys896, and His897 each coordinate Zn(2+). Over residues 891–901 (KKYKQCHGRLQ) the composition is skewed to basic residues.

The protein belongs to the SecA family. As to quaternary structure, monomer and homodimer. Part of the essential Sec protein translocation apparatus which comprises SecA, SecYEG and auxiliary proteins SecDF-YajC and YidC. The cofactor is Zn(2+).

The protein resides in the cell inner membrane. It is found in the cytoplasm. The catalysed reaction is ATP + H2O + cellular proteinSide 1 = ADP + phosphate + cellular proteinSide 2.. Functionally, part of the Sec protein translocase complex. Interacts with the SecYEG preprotein conducting channel. Has a central role in coupling the hydrolysis of ATP to the transfer of proteins into and across the cell membrane, serving both as a receptor for the preprotein-SecB complex and as an ATP-driven molecular motor driving the stepwise translocation of polypeptide chains across the membrane. This chain is Protein translocase subunit SecA, found in Escherichia coli O127:H6 (strain E2348/69 / EPEC).